Reading from the N-terminus, the 43-residue chain is Cytochrome b559 subunit beta (43 aa).

The helical transmembrane segment at 18-34 (WLSVHALGIPTIFFLGA) threads the bilayer. Heme is bound at residue histidine 22.

This sequence belongs to the PsbE/PsbF family. In terms of assembly, heterodimer of an alpha subunit and a beta subunit. PSII is composed of 1 copy each of membrane proteins PsbA, PsbB, PsbC, PsbD, PsbE, PsbF, PsbH, PsbI, PsbJ, PsbK, PsbL, PsbM, PsbT, PsbX, PsbY, PsbZ, Psb30/Ycf12, at least 3 peripheral proteins of the oxygen-evolving complex and a large number of cofactors. It forms dimeric complexes. The cofactor is heme b.

It localises to the plastid. The protein localises to the chloroplast thylakoid membrane. Its function is as follows. This b-type cytochrome is tightly associated with the reaction center of photosystem II (PSII). PSII is a light-driven water:plastoquinone oxidoreductase that uses light energy to abstract electrons from H(2)O, generating O(2) and a proton gradient subsequently used for ATP formation. It consists of a core antenna complex that captures photons, and an electron transfer chain that converts photonic excitation into a charge separation. This is Cytochrome b559 subunit beta from Stigeoclonium helveticum (Green alga).